The chain runs to 151 residues: MRVWIDADACPRAAKDQVIKFALKRKFEVLLVAGQSQVKPAFACVRLIVVPSGPDAADDYLVEHAEPGDLVICSDVPLADRLVKKGVAALDPRGRGFDERNMGERLAVRNLFTDLRDQGQVGGGQAAYGERDRQTFANALDRLLTRLSRSQ.

Belongs to the UPF0178 family.

The polypeptide is UPF0178 protein PST_0536 (Stutzerimonas stutzeri (strain A1501) (Pseudomonas stutzeri)).